Here is a 122-residue protein sequence, read N- to C-terminus: Ribosomal protein eL22-like (122 aa).

A phosphoserine mark is found at Ser112, Ser118, and Ser120.

Belongs to the eukaryotic ribosomal protein eL22 family.

The chain is Ribosomal protein eL22-like (RPL22L1) from Bos taurus (Bovine).